Reading from the N-terminus, the 65-residue chain is UPF0434 protein Mmwyl1_2153 (65 aa).

The protein belongs to the UPF0434 family.

The sequence is that of UPF0434 protein Mmwyl1_2153 from Marinomonas sp. (strain MWYL1).